The following is a 271-amino-acid chain: ATP synthase subunit a (271 aa).

Transmembrane regions (helical) follow at residues 38–58 (FWTL…LFLV), 100–120 (LIAP…LMDL), 146–166 (DVNI…FYSI), 220–240 (LIFI…LNVP), and 242–262 (AIFH…LTIV).

Belongs to the ATPase A chain family. F-type ATPases have 2 components, CF(1) - the catalytic core - and CF(0) - the membrane proton channel. CF(1) has five subunits: alpha(3), beta(3), gamma(1), delta(1), epsilon(1). CF(0) has three main subunits: a(1), b(2) and c(9-12). The alpha and beta chains form an alternating ring which encloses part of the gamma chain. CF(1) is attached to CF(0) by a central stalk formed by the gamma and epsilon chains, while a peripheral stalk is formed by the delta and b chains.

It localises to the cell inner membrane. In terms of biological role, key component of the proton channel; it plays a direct role in the translocation of protons across the membrane. The polypeptide is ATP synthase subunit a (Salmonella choleraesuis (strain SC-B67)).